We begin with the raw amino-acid sequence, 353 residues long: Ribosome biogenesis protein BRX1 homolog (353 aa).

The segment covering 1–10 (MAATKRKRRG) has biased composition (basic residues). The interval 1–46 (MAATKRKRRGGLAVQAKKLKRDAKDGKLPAKANDVSEEAAEEEKDR) is disordered. Positions 60 to 249 (ERILIFSSRG…LIKIFQGSFG (190 aa)) constitute a Brix domain. A Glycyl lysine isopeptide (Lys-Gly) (interchain with G-Cter in SUMO2) cross-link involves residue lysine 160. At serine 261 the chain carries Phosphoserine. Residue lysine 276 is modified to N6-acetyllysine. Glycyl lysine isopeptide (Lys-Gly) (interchain with G-Cter in SUMO2) cross-links involve residues lysine 314 and lysine 322.

Belongs to the BRX1 family.

The protein resides in the nucleus. It localises to the nucleolus. Functionally, required for biogenesis of the 60S ribosomal subunit. This chain is Ribosome biogenesis protein BRX1 homolog (BRIX1), found in Bos taurus (Bovine).